The primary structure comprises 466 residues: Pyruvate kinase (466 aa).

Residue Arg32 participates in substrate binding. K(+) is bound by residues Asn34, Ser36, and Asp66. 34 to 37 (NTSH) serves as a coordination point for ATP. Arg73 contributes to the ATP binding site. Glu219 serves as a coordination point for Mg(2+). Gly242, Asp243, and Thr275 together coordinate substrate. Position 243 (Asp243) interacts with Mg(2+).

Belongs to the pyruvate kinase family. As to quaternary structure, homotetramer. Requires a divalent metal cation as cofactor.

It carries out the reaction pyruvate + ATP = phosphoenolpyruvate + ADP + H(+). Its pathway is carbohydrate degradation; glycolysis; pyruvate from D-glyceraldehyde 3-phosphate: step 5/5. With respect to regulation, allosterically activated by AMP and inhibited by ATP. This chain is Pyruvate kinase (pyk), found in Thermotoga maritima (strain ATCC 43589 / DSM 3109 / JCM 10099 / NBRC 100826 / MSB8).